The chain runs to 355 residues: 3-isopropylmalate dehydrogenase (355 aa).

Residues R98, R108, R132, and D223 each contribute to the substrate site. Mg(2+) contacts are provided by D223, D247, and D251. 283 to 295 is a binding site for NAD(+); sequence GSAPDIAGQQKAD.

It belongs to the isocitrate and isopropylmalate dehydrogenases family. LeuB type 2 subfamily. In terms of assembly, homodimer. The cofactor is Mg(2+). Requires Mn(2+) as cofactor.

The protein localises to the cytoplasm. The enzyme catalyses (2R,3S)-3-isopropylmalate + NAD(+) = 4-methyl-2-oxopentanoate + CO2 + NADH. Its pathway is amino-acid biosynthesis; L-leucine biosynthesis; L-leucine from 3-methyl-2-oxobutanoate: step 3/4. Functionally, catalyzes the oxidation of 3-carboxy-2-hydroxy-4-methylpentanoate (3-isopropylmalate) to 3-carboxy-4-methyl-2-oxopentanoate. The product decarboxylates to 4-methyl-2 oxopentanoate. The sequence is that of 3-isopropylmalate dehydrogenase from Clavibacter sepedonicus (Clavibacter michiganensis subsp. sepedonicus).